Consider the following 185-residue polypeptide: Ribosome-recycling factor (185 aa).

The protein belongs to the RRF family.

The protein resides in the cytoplasm. In terms of biological role, responsible for the release of ribosomes from messenger RNA at the termination of protein biosynthesis. May increase the efficiency of translation by recycling ribosomes from one round of translation to another. In Lacticaseibacillus casei (strain BL23) (Lactobacillus casei), this protein is Ribosome-recycling factor.